The chain runs to 306 residues: MTGKHVTVLMGGWSSERSVSLSSGTACADILEAQGYNVVRVDVDDRIVSVLEELRPTTVFNALHGPFGEDGCIQGILEYLKIPYTHSGVMASALAMDKGRAKIIAASAGVSVAPSCVMSRFSLGAEHPMKPPYVIKPIREGSSFGVVIVGSDETMPLHDIMNNEWVYDDEIMVEKYVPGRELTCAVLGDEVLDVCEIVPKECFQFYDYDSKYKSGGSLHICPAKLSSNIYQNVQRMSLAAHQAIGCRGVSRSDFRFNEETGELIWLEINTQPGMTSTSLVPDIAKASGRTYGDIVKWIVEDASCMR.

In terms of domain architecture, ATP-grasp spans 102–300 (KIIAASAGVS…YGDIVKWIVE (199 aa)). 128-183 (PMKPPYVIKPIREGSSFGVVIVGSDETMPLHDIMNNEWVYDDEIMVEKYVPGRELT) serves as a coordination point for ATP. Positions 253, 267, and 269 each coordinate Mg(2+).

This sequence belongs to the D-alanine--D-alanine ligase family. Mg(2+) is required as a cofactor. It depends on Mn(2+) as a cofactor.

It localises to the cytoplasm. The catalysed reaction is 2 D-alanine + ATP = D-alanyl-D-alanine + ADP + phosphate + H(+). It functions in the pathway cell wall biogenesis; peptidoglycan biosynthesis. Its function is as follows. Cell wall formation. The sequence is that of D-alanine--D-alanine ligase from Bartonella bacilliformis (strain ATCC 35685 / KC583 / Herrer 020/F12,63).